The sequence spans 362 residues: sn-glycerol-3-phosphate import ATP-binding protein UgpC (362 aa).

The ABC transporter domain occupies 4 to 235; the sequence is LSFRNVKKTY…PASTFVAGFI (232 aa). 37–44 contributes to the ATP binding site; it reads GPSGCGKS.

The protein belongs to the ABC transporter superfamily. sn-glycerol-3-phosphate importer (TC 3.A.1.1.3) family. The complex is composed of two ATP-binding proteins (UgpC), two transmembrane proteins (UgpA and UgpE) and a solute-binding protein (UgpB).

It is found in the cell inner membrane. It carries out the reaction sn-glycerol 3-phosphate(out) + ATP + H2O = sn-glycerol 3-phosphate(in) + ADP + phosphate + H(+). Its function is as follows. Part of the ABC transporter complex UgpBAEC involved in sn-glycerol-3-phosphate (G3P) import. Responsible for energy coupling to the transport system. This Bordetella pertussis (strain Tohama I / ATCC BAA-589 / NCTC 13251) protein is sn-glycerol-3-phosphate import ATP-binding protein UgpC.